Here is a 123-residue protein sequence, read N- to C-terminus: Large ribosomal subunit protein bL12 (123 aa).

The protein belongs to the bacterial ribosomal protein bL12 family. In terms of assembly, homodimer. Part of the ribosomal stalk of the 50S ribosomal subunit. Forms a multimeric L10(L12)X complex, where L10 forms an elongated spine to which 2 to 4 L12 dimers bind in a sequential fashion. Binds GTP-bound translation factors.

Forms part of the ribosomal stalk which helps the ribosome interact with GTP-bound translation factors. Is thus essential for accurate translation. This is Large ribosomal subunit protein bL12 from Geobacillus kaustophilus (strain HTA426).